The sequence spans 654 residues: Pentatricopeptide repeat-containing protein At5g61400 (654 aa).

16 PPR repeats span residues 37-71, 74-104, 131-161, 163-197, 198-232, 233-267, 268-302, 303-337, 338-372, 373-407, 408-442, 443-477, 478-512, 513-543, 548-582, and 583-617; these read SSFSSSSLAEAILKCRSAEEAFKLFETSSRSRVSK, DLQSFSAVIHVLTGAHKYTLARCLIKSLIER, SIGVFSLLIMEFLEMGLFEEALWVSREMKCS, DSKACLSILNGLVRRRRFDSVWVDYQLMISRGLVP, DVHIYFVLFQCCFKQGLYSKKEKLLDEMTSLGIKP, NVYIYTIYILDLCRDNKMEEAEKMFELMKKHGVLP, NLYTYSAMIDGYCKTGNVRQAYGLYKEILVAELLP, NVVVFGTLVDGFCKARELVTARSLFVHMVKFGVDP, NLYVYNCLIHGHCKSGNMLEAVGLLSEMESLNLSP, DVFTYTILINGLCIEDQVAEANRLFQKMKNERIFP, SSATYNSLIHGYCKEYNMEQALDLCSEMTASGVEP, NIITFSTLIDGYCNVRDIKAAMGLYFEMTIKGIVP, DVVTYTALIDAHFKEANMKEALRLYSDMLEAGIHP, NDHTFACLVDGFWKEGRLSVAIDFYQENNQQ, NHVGFTCLIEGLCQNGYILRASRFFSDMRSCGITP, and DICSYVSMLKGHLQEKRITDTMMLQCDMIKTGILP.

This sequence belongs to the PPR family. P subfamily.

This chain is Pentatricopeptide repeat-containing protein At5g61400, found in Arabidopsis thaliana (Mouse-ear cress).